A 192-amino-acid polypeptide reads, in one-letter code: Ion-translocating oxidoreductase complex subunit A (192 aa).

6 consecutive transmembrane segments (helical) span residues 5 to 25, 39 to 59, 65 to 85, 102 to 122, 134 to 154, and 171 to 191; these read LLLLIGTVLVNNFVLVKFLGL, IGMSMATTFVLTLASILSYLV, LPFDLGYLRTMSFILVIAVVV, ALGIYLPLITTNCAVLGVALL, AIFGFGAAVGFSLVLILFSAM, and AIAMVTAGLMSLAFMGFTGLV.

Belongs to the NqrDE/RnfAE family. The complex is composed of six subunits: RnfA, RnfB, RnfC, RnfD, RnfE and RnfG.

It is found in the cell inner membrane. Its function is as follows. Part of a membrane-bound complex that couples electron transfer with translocation of ions across the membrane. This chain is Ion-translocating oxidoreductase complex subunit A, found in Shewanella pealeana (strain ATCC 700345 / ANG-SQ1).